The sequence spans 87 residues: Glutaredoxin (87 aa).

The Glutaredoxin domain occupies 1-87; it reads MFVVIFGRPG…YAKENLGLFD (87 aa). An intrachain disulfide couples Cys-11 to Cys-14.

This sequence belongs to the glutaredoxin family. Monomer.

The protein localises to the cytoplasm. Has a glutathione-disulfide oxidoreductase activity in the presence of NADPH and glutathione reductase. Reduces low molecular weight disulfides and proteins. The protein is Glutaredoxin (grx) of Vibrio cholerae serotype O1 (strain ATCC 39315 / El Tor Inaba N16961).